The sequence spans 540 residues: H(+)/hexose cotransporter 2 (540 aa).

At 1–29 the chain is on the cytoplasmic side; that stretch reads MAGGGPVASTTTNRASQYGYARGGLNWYI. A helical transmembrane segment spans residues 30-50; the sequence is FIVALTAGSGGLLFGYDIGVT. The Extracellular segment spans residues 51-90; the sequence is GGVTSMPEFLQKFFPSIYDRTQQPSDSKDPYCTYDDQKLQ. A helical transmembrane segment spans residues 91–111; it reads LFTSSFFLAGMFVSFFAGSVV. Residues 112–124 are Cytoplasmic-facing; it reads RRWGRKPTMLIAS. A helical membrane pass occupies residues 125–135; it reads VLFLAGAGLNA. Over 136-147 the chain is Extracellular; it reads GAQDLAMLVIGR. The helical transmembrane segment at 148-168 threads the bilayer; the sequence is VLLGFGVGGGNNAVPLYLSEC. The Cytoplasmic segment spans residues 169–176; the sequence is APPKYRGG. Residues 177–197 form a helical membrane-spanning segment; the sequence is LNMMFQLAVTIGIIVAQLVNY. Residues 198-207 lie on the Extracellular side of the membrane; the sequence is GTQTMNNGWR. The chain crosses the membrane as a helical span at residues 208–228; the sequence is LSLGLAGVPAIILLIGSLLLP. Topologically, residues 229 to 296 are cytoplasmic; that stretch reads ETPNSLIERG…YSPMLIVTSL (68 aa). Residues 297–317 form a helical membrane-spanning segment; it reads IAMLQQLTGINAIMFYVPVLF. At 318 to 326 the chain is on the extracellular side; the sequence is SSFGTARHA. A helical membrane pass occupies residues 327-337; it reads ALLNTVIIGAV. Topologically, residues 338 to 355 are cytoplasmic; it reads NVAATFVSIFSVDKFGRR. A helical transmembrane segment spans residues 356–376; it reads GLFLEGGIQMFIGQVVTAAVL. Residues 377–396 are Extracellular-facing; it reads GVELNKYGTNLPSSTAAGVL. Residues 397 to 417 form a helical membrane-spanning segment; it reads VVICVYVAAFAWSWGPLGWLV. Residues 418–435 lie on the Cytoplasmic side of the membrane; the sequence is PSEIQTLETRGAGMSMAV. The chain crosses the membrane as a helical span at residues 436–456; that stretch reads IVNFLFSFVIGQAFLSMMCAM. The Extracellular segment spans residues 457 to 458; sequence RW. Residues 459–479 traverse the membrane as a helical segment; the sequence is GVFLFFAGWVVIMTFFVYFCL. Residues 480–540 lie on the Cytoplasmic side of the membrane; that stretch reads PETKGVPVET…SEDGKPASDQ (61 aa).

This sequence belongs to the major facilitator superfamily. Sugar transporter (TC 2.A.1.1) family.

The protein localises to the membrane. Functionally, active uptake of galactose. The sequence is that of H(+)/hexose cotransporter 2 (HUP2) from Parachlorella kessleri (Green alga).